Reading from the N-terminus, the 406-residue chain is Probable endo-xylogalacturonan hydrolase A (406 aa).

The signal sequence occupies residues 1–18; that stretch reads MLYYRNLALLSLLSLSSA. 4 PbH1 repeats span residues 183–213, 214–235, 237–257, and 299–320; these read AKDVTFTNLRMDATSRSDNPPKNTDGFDIGS, STHVTISSVSVSNDDDCVALKP, CNYVTVENVTCTGSHGISVGS, and VKNVTFSDFNVRGCDYAFQIQS. Residue Asp228 is the Proton donor of the active site. An N-linked (GlcNAc...) asparagine glycan is attached at Asn244. His251 is a catalytic residue. Asn301 carries N-linked (GlcNAc...) asparagine glycosylation.

Belongs to the glycosyl hydrolase 28 family.

The protein localises to the secreted. Pectinolytic enzyme involved in the degradation of xylogalacturonan (xga), a galacturonan backbone heavily substituted with xylose, and which is one important component of the hairy regions of pectin. Activity requires a galacturonic acid backbone substituted with xylose. This Neosartorya fischeri (strain ATCC 1020 / DSM 3700 / CBS 544.65 / FGSC A1164 / JCM 1740 / NRRL 181 / WB 181) (Aspergillus fischerianus) protein is Probable endo-xylogalacturonan hydrolase A (xghA).